A 347-amino-acid chain; its full sequence is MSAPARVLVVDDSPTMRGLITAVLSSDPEVSVIGQAGDALEAREAIKRLNPDVVTLDIEMPNMNGLDFLEKIMTLRPMPVIMVSTMTHRGAEATLAALEIGAFDCVGKPGPGEHRPFGDLAEKVKAAARTQRQFSQPAAAVAPPPSVADFRVGRKIVAIGSSTGGVEALIAVLQKFPANCPPTVITQHMPPTFTKSFAERLNRLCAPVVQEATDGARLEIGKIYLAPGGERHLQVSGGSAPCCRLVDRAPVNGHRPSVDVLFDSVAELAGRNAVGVILTGMGRDGAAGLLKMRHAGARTLGQTEKTCVVYGMPRVAHELGAVEQQLPLTAIGEEILKLTAARKEGTE.

The 118-residue stretch at 6–123 (RVLVVDDSPT…HRPFGDLAEK (118 aa)) folds into the Response regulatory domain. At aspartate 57 the chain carries 4-aspartylphosphate. The CheB-type methylesterase domain maps to 150 to 342 (FRVGRKIVAI…EEILKLTAAR (193 aa)). Active-site residues include serine 162, histidine 188, and aspartate 284.

This sequence belongs to the CheB family. Post-translationally, phosphorylated by CheA. Phosphorylation of the N-terminal regulatory domain activates the methylesterase activity.

It localises to the cytoplasm. It carries out the reaction [protein]-L-glutamate 5-O-methyl ester + H2O = L-glutamyl-[protein] + methanol + H(+). The enzyme catalyses L-glutaminyl-[protein] + H2O = L-glutamyl-[protein] + NH4(+). In terms of biological role, involved in chemotaxis. Part of a chemotaxis signal transduction system that modulates chemotaxis in response to various stimuli. Catalyzes the demethylation of specific methylglutamate residues introduced into the chemoreceptors (methyl-accepting chemotaxis proteins or MCP) by CheR. Also mediates the irreversible deamidation of specific glutamine residues to glutamic acid. The polypeptide is Protein-glutamate methylesterase/protein-glutamine glutaminase (Rhizobium etli (strain ATCC 51251 / DSM 11541 / JCM 21823 / NBRC 15573 / CFN 42)).